The chain runs to 184 residues: ATP synthase subunit b, chloroplastic (184 aa).

The chain crosses the membrane as a helical span at residues 27 to 49; that stretch reads LATNPINLSVVLGVLVFFGKGVL.

This sequence belongs to the ATPase B chain family. As to quaternary structure, F-type ATPases have 2 components, F(1) - the catalytic core - and F(0) - the membrane proton channel. F(1) has five subunits: alpha(3), beta(3), gamma(1), delta(1), epsilon(1). F(0) has four main subunits: a(1), b(1), b'(1) and c(10-14). The alpha and beta chains form an alternating ring which encloses part of the gamma chain. F(1) is attached to F(0) by a central stalk formed by the gamma and epsilon chains, while a peripheral stalk is formed by the delta, b and b' chains.

The protein resides in the plastid. It is found in the chloroplast thylakoid membrane. Functionally, f(1)F(0) ATP synthase produces ATP from ADP in the presence of a proton or sodium gradient. F-type ATPases consist of two structural domains, F(1) containing the extramembraneous catalytic core and F(0) containing the membrane proton channel, linked together by a central stalk and a peripheral stalk. During catalysis, ATP synthesis in the catalytic domain of F(1) is coupled via a rotary mechanism of the central stalk subunits to proton translocation. Its function is as follows. Component of the F(0) channel, it forms part of the peripheral stalk, linking F(1) to F(0). This chain is ATP synthase subunit b, chloroplastic, found in Phaseolus vulgaris (Kidney bean).